The sequence spans 157 residues: Arginine repressor (157 aa).

Belongs to the ArgR family.

The protein localises to the cytoplasm. It functions in the pathway amino-acid biosynthesis; L-arginine biosynthesis [regulation]. Its function is as follows. Regulates arginine biosynthesis genes. In Colwellia psychrerythraea (strain 34H / ATCC BAA-681) (Vibrio psychroerythus), this protein is Arginine repressor.